The following is a 458-amino-acid chain: D-inositol 3-phosphate glycosyltransferase (458 aa).

The tract at residues 1 to 29 (MRADRPGHRSRGINPGPGMFTLVGPDERD) is disordered. H47 contributes to the 1D-myo-inositol 3-phosphate binding site. UDP-N-acetyl-alpha-D-glucosamine is bound by residues 53 to 54 (QP) and G61. Residues 58–63 (DAGGMN), K116, Y149, T173, and R193 each bind 1D-myo-inositol 3-phosphate. R267, K272, and V339 together coordinate UDP-N-acetyl-alpha-D-glucosamine. A351 provides a ligand contact to Mg(2+). UDP-N-acetyl-alpha-D-glucosamine contacts are provided by E361 and E369. Residue T375 coordinates Mg(2+).

It belongs to the glycosyltransferase group 1 family. MshA subfamily. As to quaternary structure, homodimer.

It catalyses the reaction 1D-myo-inositol 3-phosphate + UDP-N-acetyl-alpha-D-glucosamine = 1D-myo-inositol 2-acetamido-2-deoxy-alpha-D-glucopyranoside 3-phosphate + UDP + H(+). In terms of biological role, catalyzes the transfer of a N-acetyl-glucosamine moiety to 1D-myo-inositol 3-phosphate to produce 1D-myo-inositol 2-acetamido-2-deoxy-glucopyranoside 3-phosphate in the mycothiol biosynthesis pathway. The polypeptide is D-inositol 3-phosphate glycosyltransferase (Nocardioides sp. (strain ATCC BAA-499 / JS614)).